Reading from the N-terminus, the 231-residue chain is PIAGSMVLAAILLKLGGYGIIRMMQVLPTTKTDMFLPFIVLALWGAILANLTCLQQTDLKSLIAYSSISHMGLVVATIIIQTPWGLSGALALMIAHGFTSSALFCLANTTYERTHTRILILTRGLHNILPMATTWWLLANLMNIAIPPTMNFTGELLITSALFNWCPTTIIMLGLSMLITASYSLHMFLSTQMGQTTLNNQTEPTHSREHLLMTLHLIPLMMISMKPELII.

The next 6 membrane-spanning stretches (helical) occupy residues 1–21 (PIAG…YGII), 34–54 (MFLP…LTCL), 63–85 (IAYS…TPWG), 89–111 (ALAL…NTTY), 128–148 (ILPM…AIPP), and 169–189 (TIIM…HMFL).

Belongs to the complex I subunit 4 family.

The protein resides in the mitochondrion membrane. It catalyses the reaction a ubiquinone + NADH + 5 H(+)(in) = a ubiquinol + NAD(+) + 4 H(+)(out). In terms of biological role, core subunit of the mitochondrial membrane respiratory chain NADH dehydrogenase (Complex I) that is believed to belong to the minimal assembly required for catalysis. Complex I functions in the transfer of electrons from NADH to the respiratory chain. The immediate electron acceptor for the enzyme is believed to be ubiquinone. The polypeptide is NADH-ubiquinone oxidoreductase chain 4 (MT-ND4) (Bothrocophias hyoprora (Amazonian hognose viper)).